Reading from the N-terminus, the 634-residue chain is Dynein axonemal assembly factor 1 (634 aa).

The disordered stretch occupies residues 1 to 80 (MHPEVSEPPV…SRDDREDRGP (80 aa)). The segment covering 22–42 (AGDHGDAGPGIRKEEISETKE) has biased composition (basic and acidic residues). Positions 48 to 62 (CTTSCPSQQQPSGDN) are enriched in polar residues. The span at 70 to 80 (HSRDDREDRGP) shows a compositional bias: basic and acidic residues. LRR repeat units follow at residues 101 to 123 (ALND…EEYT), 124 to 145 (GLRC…QAQS), 146 to 167 (ELRC…EPLQ), 168 to 189 (KLDA…SCLP), 190 to 211 (VLNT…EHLR), and 215 to 236 (RLCV…SVLE). Residues 249–288 (NPVTKHIPNYRRTVTVRLKHLTYLDDRPVFPKDRACAEAW) enclose the LRRCT domain. Over residues 326–336 (EERKKARDRGE) the composition is skewed to basic and acidic residues. A disordered region spans residues 326 to 358 (EERKKARDRGETPLPDSEGSIPTSPEAEEKQPM). Ser349 is subject to Phosphoserine. Thr462 bears the Phosphothreonine mark. Phosphoserine is present on residues Ser465 and Ser488. 2 disordered regions span residues 481–505 (ISSL…ATPT) and 559–634 (ELND…FGLD).

This sequence belongs to the DNAAF1 family.

Its subcellular location is the cell projection. The protein localises to the cilium. Its function is as follows. Cilium-specific protein required for the stability of the ciliary architecture. Plays a role in cytoplasmic preassembly of dynein arms. Involved in regulation of microtubule-based cilia and actin-based brush border microvilli. The polypeptide is Dynein axonemal assembly factor 1 (Dnaaf1) (Mus musculus (Mouse)).